A 387-amino-acid polypeptide reads, in one-letter code: S-adenosylmethionine synthase (387 aa).

His-17 is a binding site for ATP. Asp-19 is a Mg(2+) binding site. Residue Glu-45 coordinates K(+). 2 residues coordinate L-methionine: Glu-58 and Gln-101. Residues 101 to 111 (QSADIAMGVDA) form a flexible loop region. Residues 166-168 (DAK), 231-232 (RF), Asp-240, 246-247 (RK), Ala-263, and Lys-267 contribute to the ATP site. Residue Asp-240 participates in L-methionine binding. An L-methionine-binding site is contributed by Lys-271.

Belongs to the AdoMet synthase family. As to quaternary structure, homotetramer; dimer of dimers. It depends on Mg(2+) as a cofactor. The cofactor is K(+).

It is found in the cytoplasm. It catalyses the reaction L-methionine + ATP + H2O = S-adenosyl-L-methionine + phosphate + diphosphate. The protein operates within amino-acid biosynthesis; S-adenosyl-L-methionine biosynthesis; S-adenosyl-L-methionine from L-methionine: step 1/1. In terms of biological role, catalyzes the formation of S-adenosylmethionine (AdoMet) from methionine and ATP. The overall synthetic reaction is composed of two sequential steps, AdoMet formation and the subsequent tripolyphosphate hydrolysis which occurs prior to release of AdoMet from the enzyme. The protein is S-adenosylmethionine synthase of Rhodospirillum centenum (strain ATCC 51521 / SW).